The sequence spans 312 residues: Glycerol-3-phosphate dehydrogenase [NAD(P)+] (312 aa).

The NADPH site is built by Trp11, Arg30, Arg31, and Lys95. 3 residues coordinate sn-glycerol 3-phosphate: Lys95, Gly123, and Ser125. Ala127 contacts NADPH. Sn-glycerol 3-phosphate is bound by residues Lys177, Asp230, Ser240, Arg241, and Asn242. Lys177 (proton acceptor) is an active-site residue. Arg241 serves as a coordination point for NADPH. Residues Val265 and Glu267 each coordinate NADPH.

This sequence belongs to the NAD-dependent glycerol-3-phosphate dehydrogenase family.

It localises to the cytoplasm. The enzyme catalyses sn-glycerol 3-phosphate + NAD(+) = dihydroxyacetone phosphate + NADH + H(+). It carries out the reaction sn-glycerol 3-phosphate + NADP(+) = dihydroxyacetone phosphate + NADPH + H(+). It functions in the pathway membrane lipid metabolism; glycerophospholipid metabolism. Functionally, catalyzes the reduction of the glycolytic intermediate dihydroxyacetone phosphate (DHAP) to sn-glycerol 3-phosphate (G3P), the key precursor for phospholipid synthesis. This is Glycerol-3-phosphate dehydrogenase [NAD(P)+] from Helicobacter pylori (strain Shi470).